The following is a 267-amino-acid chain: MQRIAVMGAAGRMGKTLIEAVSQAEGATLSAAIDRADSSLIGADAGELVGLGKIGVTLAGDLAAMVDDFDVLIDFTHPSVTLKNLEVCRQAGKAMVIGTTGFTVEEKQQLSEAAKQIPIVFAANFSVGVNLCLKLLDTAARVLGDDVDIEIIEAHHRHKVDAPSGTALRMGEVVADALGRDLQKVAVYGREGQTGARERETIGFATVRAGDVVGDHTVLFAADGERVEITHKASSRMTFAKGAVRSALWLQQRSPALYDMQDVLGLR.

Residues 8-13 (GAAGRM) and Asp-34 each bind NAD(+). Arg-35 contributes to the NADP(+) binding site. NAD(+) is bound by residues 98–100 (GTT) and 122–125 (AANF). The active-site Proton donor/acceptor is the His-155. His-156 contacts (S)-2,3,4,5-tetrahydrodipicolinate. Lys-159 (proton donor) is an active-site residue. Residue 165-166 (GT) coordinates (S)-2,3,4,5-tetrahydrodipicolinate.

Belongs to the DapB family.

The protein resides in the cytoplasm. The enzyme catalyses (S)-2,3,4,5-tetrahydrodipicolinate + NAD(+) + H2O = (2S,4S)-4-hydroxy-2,3,4,5-tetrahydrodipicolinate + NADH + H(+). The catalysed reaction is (S)-2,3,4,5-tetrahydrodipicolinate + NADP(+) + H2O = (2S,4S)-4-hydroxy-2,3,4,5-tetrahydrodipicolinate + NADPH + H(+). It participates in amino-acid biosynthesis; L-lysine biosynthesis via DAP pathway; (S)-tetrahydrodipicolinate from L-aspartate: step 4/4. Its function is as follows. Catalyzes the conversion of 4-hydroxy-tetrahydrodipicolinate (HTPA) to tetrahydrodipicolinate. This Ectopseudomonas mendocina (strain ymp) (Pseudomonas mendocina) protein is 4-hydroxy-tetrahydrodipicolinate reductase.